Consider the following 179-residue polypeptide: UPF0227 protein VS_2073 (179 aa).

Belongs to the UPF0227 family.

The polypeptide is UPF0227 protein VS_2073 (Vibrio atlanticus (strain LGP32) (Vibrio splendidus (strain Mel32))).